The chain runs to 230 residues: Ribonuclease 3 (230 aa).

An RNase III domain is found at 5 to 125; sequence YSRFYNILGY…VIGAIYLDSD (121 aa). Glutamate 40 is a Mg(2+) binding site. Aspartate 44 is an active-site residue. Mg(2+) is bound by residues aspartate 111 and glutamate 114. The active site involves glutamate 114. Residues 153–223 form the DRBM domain; it reads DSKSKLQEIL…AEKMIEMLSQ (71 aa).

This sequence belongs to the ribonuclease III family. In terms of assembly, homodimer. It depends on Mg(2+) as a cofactor.

The protein localises to the cytoplasm. The enzyme catalyses Endonucleolytic cleavage to 5'-phosphomonoester.. Its function is as follows. Digests double-stranded RNA. Involved in the processing of primary rRNA transcript to yield the immediate precursors to the large and small rRNAs (23S and 16S). Processes some mRNAs, and tRNAs when they are encoded in the rRNA operon. Processes pre-crRNA and tracrRNA of type II CRISPR loci if present in the organism. This chain is Ribonuclease 3, found in Francisella tularensis subsp. tularensis (strain FSC 198).